The following is a 475-amino-acid chain: MHETTLKREGASTPSNPTPSTHAAGSGKIYIRTFGCQMNEYDSDKMVDVLREDQGLEMTDNPEEADVILFNTCSVREKAQEKVFSDLGRVQHLKKLNPNLVIGVGGCVASQEGAAIVKRAPYVDVVFGPQTLHRLPELIRRRRDEGVSQVDISFPEIEKFDNMPPSRVEGATAFVSIMEGCSKYCSFCVVPYTRGEEVSRPFEDVLTEVADLADQGVREVTLLGQNVNAYRGRIEGSDEIADFAMLLEYVHEIPGIERIRYTTSHPKEMTQRMVEAYARLPKLVSFLHLPVQAGSDRVLAAMKRGYTALEFKSVVRKLRAARPNLTLSSDFIVGFPGETEEDFQKTMKLIADVGFDTSFSFVYSRRPGTPAADLQDDTPQDVKLKRLQQLQALINEQAAAIAQSMVGTRQRLLVEGPSRRDPNELMGRTENNRIVNFEGPSRLIGNMVDVIITHAFTNSLRGRVAGTEESDQGAA.

Positions Met-1–Gly-10 are enriched in basic and acidic residues. The segment at Met-1–Gly-25 is disordered. Residues Ser-12–Ala-23 show a composition bias toward polar residues. Residues Gly-27–Asp-144 enclose the MTTase N-terminal domain. The [4Fe-4S] cluster site is built by Cys-36, Cys-73, Cys-107, Cys-181, Cys-185, and Cys-188. The 234-residue stretch at Arg-167–Ala-400 folds into the Radical SAM core domain. The 64-residue stretch at Gln-403–Gly-466 folds into the TRAM domain.

The protein belongs to the methylthiotransferase family. MiaB subfamily. Monomer. Requires [4Fe-4S] cluster as cofactor.

It is found in the cytoplasm. It carries out the reaction N(6)-dimethylallyladenosine(37) in tRNA + (sulfur carrier)-SH + AH2 + 2 S-adenosyl-L-methionine = 2-methylsulfanyl-N(6)-dimethylallyladenosine(37) in tRNA + (sulfur carrier)-H + 5'-deoxyadenosine + L-methionine + A + S-adenosyl-L-homocysteine + 2 H(+). In terms of biological role, catalyzes the methylthiolation of N6-(dimethylallyl)adenosine (i(6)A), leading to the formation of 2-methylthio-N6-(dimethylallyl)adenosine (ms(2)i(6)A) at position 37 in tRNAs that read codons beginning with uridine. The sequence is that of tRNA-2-methylthio-N(6)-dimethylallyladenosine synthase from Bordetella avium (strain 197N).